We begin with the raw amino-acid sequence, 962 residues long: Glycine dehydrogenase (decarboxylating) (962 aa).

At Lys-709 the chain carries N6-(pyridoxal phosphate)lysine.

This sequence belongs to the GcvP family. In terms of assembly, the glycine cleavage system is composed of four proteins: P, T, L and H. Requires pyridoxal 5'-phosphate as cofactor.

The catalysed reaction is N(6)-[(R)-lipoyl]-L-lysyl-[glycine-cleavage complex H protein] + glycine + H(+) = N(6)-[(R)-S(8)-aminomethyldihydrolipoyl]-L-lysyl-[glycine-cleavage complex H protein] + CO2. Its function is as follows. The glycine cleavage system catalyzes the degradation of glycine. The P protein binds the alpha-amino group of glycine through its pyridoxal phosphate cofactor; CO(2) is released and the remaining methylamine moiety is then transferred to the lipoamide cofactor of the H protein. The chain is Glycine dehydrogenase (decarboxylating) from Shewanella pealeana (strain ATCC 700345 / ANG-SQ1).